The sequence spans 134 residues: Profilin-3 (134 aa).

Cys13 and Cys118 form a disulfide bridge. An Involved in PIP2 interaction motif is present at residues Ala84 to Thr100. The residue at position 114 (Thr114) is a Phosphothreonine.

Belongs to the profilin family. Occurs in many kinds of cells as a complex with monomeric actin in a 1:1 ratio. In terms of processing, phosphorylated by MAP kinases.

The protein resides in the cytoplasm. The protein localises to the cytoskeleton. Binds to actin and affects the structure of the cytoskeleton. At high concentrations, profilin prevents the polymerization of actin, whereas it enhances it at low concentrations. The protein is Profilin-3 of Olea europaea (Common olive).